A 333-amino-acid polypeptide reads, in one-letter code: Ketol-acid reductoisomerase (NADP(+)) (333 aa).

A KARI N-terminal Rossmann domain is found at 1–179 (MFYDDDADLS…GGTRAGVIKT (179 aa)). NADP(+)-binding positions include 22-25 (YGSQ), lysine 45, serine 48, serine 50, and 80-83 (DTAQ). The active site involves histidine 105. Position 131 (glycine 131) interacts with NADP(+). A KARI C-terminal knotted domain is found at 180 to 325 (TFKDETETDL…KKLRDLMSWV (146 aa)). Mg(2+) is bound by residues aspartate 188, glutamate 192, glutamate 224, and glutamate 228. A substrate-binding site is contributed by serine 249.

Belongs to the ketol-acid reductoisomerase family. The cofactor is Mg(2+).

It catalyses the reaction (2R)-2,3-dihydroxy-3-methylbutanoate + NADP(+) = (2S)-2-acetolactate + NADPH + H(+). It carries out the reaction (2R,3R)-2,3-dihydroxy-3-methylpentanoate + NADP(+) = (S)-2-ethyl-2-hydroxy-3-oxobutanoate + NADPH + H(+). It participates in amino-acid biosynthesis; L-isoleucine biosynthesis; L-isoleucine from 2-oxobutanoate: step 2/4. Its pathway is amino-acid biosynthesis; L-valine biosynthesis; L-valine from pyruvate: step 2/4. Functionally, involved in the biosynthesis of branched-chain amino acids (BCAA). Catalyzes an alkyl-migration followed by a ketol-acid reduction of (S)-2-acetolactate (S2AL) to yield (R)-2,3-dihydroxy-isovalerate. In the isomerase reaction, S2AL is rearranged via a Mg-dependent methyl migration to produce 3-hydroxy-3-methyl-2-ketobutyrate (HMKB). In the reductase reaction, this 2-ketoacid undergoes a metal-dependent reduction by NADPH to yield (R)-2,3-dihydroxy-isovalerate. The sequence is that of Ketol-acid reductoisomerase (NADP(+)) from Mycobacterium ulcerans (strain Agy99).